The primary structure comprises 675 residues: MTIMDINQQIKQLRDTLRYHEYQYHVLDDPKIPDAEYDRLFHQLKALEQQHPELITADSPTQRVGAKPLAGFAQITHELPMLSLDNAFSDEEFNAFVKRIQDRLIVLPQPLTFCCEPKLDGLAVSIFYVNGVLTQAATRGDGTTGEDITLNIRTIRNIPLQLLTDNPPARLEVRGEVFMPHEGFNRLNERALEHGEKTFANPRNAAAGSLRQLDPKITSRRPLVFNAYSVGIAEGVELPATHYERLQWLKSVGIPVNSEVQLCDGSEKVLEFYRSMQQKRPTLGYDIDGTVLKINDIGLQRELGFISKAPRWAIAYKFPAQEELTRLNDVEFQVGRTGAITPVAKLAPVFVAGVTVSNATLHNGDEIARLDIAIGDTVVIRRAGDVIPQIIGVLHERRPANAQAIVFPTQCPVCGSKIVRIEGEAVARCTGGLFCDAQRKEALKHFVSRRAMDIDGVGAKLIEQLVDKELIRTPADLFKLDLITLMRLERMGEKSAQNALDSLEKAKNTTLARFIFALGIREVGEATALNLANHFKNLDALQAASPEQLQEVADVGEVVANRIYVFWREQHNIDAVNDLIAQGIHWETVETKEAGENPFKGKTVVLTGTLTQMGRNETKDLLQQLGAKAAGSVSAKTHFVIAGDNAGSKLTKAQELGVAVMSEAEFLAIVNAYKR.

Residues D34 to D38, S83 to L84, and E116 contribute to the NAD(+) site. K118 serves as the catalytic N6-AMP-lysine intermediate. Positions 139, 176, 293, and 317 each coordinate NAD(+). Residues C411, C414, C429, and C435 each contribute to the Zn(2+) site. Residues A594 to R675 enclose the BRCT domain.

The protein belongs to the NAD-dependent DNA ligase family. LigA subfamily. Mg(2+) is required as a cofactor. Requires Mn(2+) as cofactor.

The enzyme catalyses NAD(+) + (deoxyribonucleotide)n-3'-hydroxyl + 5'-phospho-(deoxyribonucleotide)m = (deoxyribonucleotide)n+m + AMP + beta-nicotinamide D-nucleotide.. Functionally, DNA ligase that catalyzes the formation of phosphodiester linkages between 5'-phosphoryl and 3'-hydroxyl groups in double-stranded DNA using NAD as a coenzyme and as the energy source for the reaction. It is essential for DNA replication and repair of damaged DNA. This Mannheimia succiniciproducens (strain KCTC 0769BP / MBEL55E) protein is DNA ligase.